A 377-amino-acid polypeptide reads, in one-letter code: Probable G-protein coupled receptor F27E5.8 (377 aa).

The Extracellular segment spans residues 1–34 (MSEQDSSSPKYMRFLLGNFTSAEMVTDGNFLIYC). Asn18 carries N-linked (GlcNAc...) asparagine glycosylation. The chain crosses the membrane as a helical span at residues 35–55 (IEMGLLVIGVLENIFMIGAVF). Residues 56-71 (STSCLHLNLRILICNC) lie on the Cytoplasmic side of the membrane. A helical membrane pass occupies residues 72–92 (CLGFILMAVGRAMIAVPLCIA). Residues 93 to 105 (HLRDVDISSHAWC) lie on the Extracellular side of the membrane. The chain crosses the membrane as a helical span at residues 106–126 (FIANAVHHSSADSVCLSFVFI). Topologically, residues 127 to 144 (MLERTAGTIWSKDYEKTK) are cytoplasmic. A helical membrane pass occupies residues 145-165 (IHIFPCIFAFLQWFIPMFMIL). Topologically, residues 166–195 (GNFLDRANRMEHFLLYPHLPCQIEYLTPTM) are extracellular. The chain crosses the membrane as a helical span at residues 196 to 216 (FMITIFIIVIGFIASVGGITI). Residues 217 to 251 (VYNKNIKKYNTRDIWFNTVNLSERYQITENIRSTH) lie on the Cytoplasmic side of the membrane. Residues 252-272 (LLFPLLALMLIFSTLSVSVLI) traverse the membrane as a helical segment. At 273-303 (YGGYWVSVMTKEPARFEEVVKWFGRGGEAAQ) the chain is on the extracellular side. The helical transmembrane segment at 304–324 (LFDIITAIYTISFPICAFICH) threads the bilayer. Residues 325-377 (PNLFRFLRKFIGWNSYAVRPSNLNEIGGFEMSTAPIRTQTEFHFQELSRQWNT) lie on the Cytoplasmic side of the membrane.

It belongs to the G-protein coupled receptor 1 family.

It is found in the cell membrane. This chain is Probable G-protein coupled receptor F27E5.8, found in Caenorhabditis elegans.